Reading from the N-terminus, the 465-residue chain is Serine hydroxymethyltransferase (465 aa).

An N6-(pyridoxal phosphate)lysine modification is found at Lys241.

Belongs to the SHMT family. Homotetramer. The cofactor is pyridoxal 5'-phosphate. As to expression, highest expression in the ovary and testis. 6- to 7-fold lower expression in hemocyte, silk gland, midgut and fat body.

The enzyme catalyses (6R)-5,10-methylene-5,6,7,8-tetrahydrofolate + glycine + H2O = (6S)-5,6,7,8-tetrahydrofolate + L-serine. The protein operates within one-carbon metabolism; tetrahydrofolate interconversion. In terms of biological role, interconversion of serine and glycine. The chain is Serine hydroxymethyltransferase (692975) from Bombyx mori (Silk moth).